Reading from the N-terminus, the 433-residue chain is sn-glycerol-3-phosphate-binding periplasmic protein UgpB (433 aa).

The first 25 residues, M1–A25, serve as a signal peptide directing secretion. Sn-glycerol 3-phosphate-binding residues include Y67, D91, S146, S273, G307, Y346, and R397.

Belongs to the bacterial solute-binding protein 1 family. In terms of assembly, the complex is composed of two ATP-binding proteins (UgpC), two transmembrane proteins (UgpA and UgpE) and a solute-binding protein (UgpB).

Its subcellular location is the periplasm. Functionally, part of the ABC transporter complex UgpBAEC involved in sn-glycerol-3-phosphate (G3P) import. Binds G3P. In Brucella melitensis biotype 1 (strain ATCC 23456 / CCUG 17765 / NCTC 10094 / 16M), this protein is sn-glycerol-3-phosphate-binding periplasmic protein UgpB (ugpB).